A 146-amino-acid polypeptide reads, in one-letter code: UPF0735 ACT domain-containing protein Teth514_2312 (146 aa).

Residues 71–146 (TLSMVLDHMP…GVRKIEILGE (76 aa)) form the ACT domain.

Belongs to the UPF0735 family.

This Thermoanaerobacter sp. (strain X514) protein is UPF0735 ACT domain-containing protein Teth514_2312.